The primary structure comprises 625 residues: Alpha-protein kinase vwkA (625 aa).

The segment covering methionine 1 to threonine 15 has biased composition (basic and acidic residues). The tract at residues methionine 1–histidine 64 is disordered. 2 stretches are compositionally biased toward polar residues: residues aspartate 25–glycine 39 and serine 46–threonine 63. Residues threonine 87 to alanine 114 are a coiled coil. In terms of domain architecture, VWFA spans aspartate 122–isoleucine 322. An Alpha-type protein kinase domain is found at threonine 386 to proline 600. Glycine 570–lysine 576 is a binding site for ATP. Residues phenylalanine 602–tyrosine 625 form a disordered region.

The protein belongs to the protein kinase superfamily. Alpha-type protein kinase family. ALPK subfamily. As to quaternary structure, interacts with calmodulin; in the presence of calcium. Autophosphorylated, in vitro.

The protein localises to the cytoplasm. The protein resides in the cytosol. Its subcellular location is the perinuclear region. It is found in the contractile vacuole membrane. It catalyses the reaction L-seryl-[protein] + ATP = O-phospho-L-seryl-[protein] + ADP + H(+). The enzyme catalyses L-threonyl-[protein] + ATP = O-phospho-L-threonyl-[protein] + ADP + H(+). Its activity is regulated as follows. Autophosphorylation activity enhanced by calcium/calmodulin. In terms of biological role, displays a modest preference for threonine over serine residues. Does not phosphorylate myosin II, however can phosphorylate MBP, in vitro. May be involved in the regulation of myosin II function during cytokinesis. Overexpression leads to impaired cell proliferation in suspension culture and fails to develop beyond the mound stage. Both overexpression and absence of the gene can result in defects in cytokinesis and alterations in myosin II abundance and assembly. This is Alpha-protein kinase vwkA (vwkA) from Dictyostelium discoideum (Social amoeba).